The primary structure comprises 181 residues: Ribulose bisphosphate carboxylase small subunit, chloroplastic 2 (181 aa).

A chloroplast-targeting transit peptide spans 1 to 57 (MASSVISSAAVATRTNVTQAGSMIAPFTGLKSAATFPVSRKQNLDITSIASNGGRVR).

The protein belongs to the RuBisCO small chain family. Heterohexadecamer of 8 large and 8 small subunits.

It is found in the plastid. Its subcellular location is the chloroplast. Its function is as follows. RuBisCO catalyzes two reactions: the carboxylation of D-ribulose 1,5-bisphosphate, the primary event in carbon dioxide fixation, as well as the oxidative fragmentation of the pentose substrate. Both reactions occur simultaneously and in competition at the same active site. Although the small subunit is not catalytic it is essential for maximal activity. The protein is Ribulose bisphosphate carboxylase small subunit, chloroplastic 2 of Solanum tuberosum (Potato).